The sequence spans 301 residues: GTPase Era (301 aa).

Residues 7–175 (YCGFIAIVGR…AAIVRKHLPE (169 aa)) form the Era-type G domain. The interval 15 to 22 (GRPNVGKS) is G1. 15–22 (GRPNVGKS) serves as a coordination point for GTP. Residues 41-45 (QTTRH) are G2. The tract at residues 62–65 (DTPG) is G3. Residues 62 to 66 (DTPGL) and 124 to 127 (NKVD) each bind GTP. The segment at 124-127 (NKVD) is G4. Residues 154–156 (ISA) are G5. The KH type-2 domain occupies 206–283 (LGAELPYSVT…HLELWVKVKS (78 aa)).

This sequence belongs to the TRAFAC class TrmE-Era-EngA-EngB-Septin-like GTPase superfamily. Era GTPase family. In terms of assembly, monomer.

It localises to the cytoplasm. It is found in the cell inner membrane. Its function is as follows. An essential GTPase that binds both GDP and GTP, with rapid nucleotide exchange. Plays a role in 16S rRNA processing and 30S ribosomal subunit biogenesis and possibly also in cell cycle regulation and energy metabolism. This is GTPase Era from Shigella flexneri serotype 5b (strain 8401).